Consider the following 293-residue polypeptide: Ribosomal RNA small subunit methyltransferase A (293 aa).

Asn-29, Leu-31, Gly-56, Glu-77, Asp-102, and Asn-127 together coordinate S-adenosyl-L-methionine.

Belongs to the class I-like SAM-binding methyltransferase superfamily. rRNA adenine N(6)-methyltransferase family. RsmA subfamily.

The protein localises to the cytoplasm. The catalysed reaction is adenosine(1518)/adenosine(1519) in 16S rRNA + 4 S-adenosyl-L-methionine = N(6)-dimethyladenosine(1518)/N(6)-dimethyladenosine(1519) in 16S rRNA + 4 S-adenosyl-L-homocysteine + 4 H(+). Specifically dimethylates two adjacent adenosines (A1518 and A1519) in the loop of a conserved hairpin near the 3'-end of 16S rRNA in the 30S particle. May play a critical role in biogenesis of 30S subunits. The polypeptide is Ribosomal RNA small subunit methyltransferase A (Geobacillus thermodenitrificans (strain NG80-2)).